A 168-amino-acid chain; its full sequence is Secretory-abundant heat soluble protein 33020 (168 aa).

The first 19 residues, 1–19, serve as a signal peptide directing secretion; the sequence is MARFLVALALFGVVAMTAA. The SAHS-c1 stretch occupies residues 26–57; it reads EWSGKPWLGKFVAEVSDKSENWEAFVDALGLP. The interval 72 to 100 is SAHS-c2; sequence YKQGEHYHHILSLPDKNINKDIEFTLGQE. The tract at residues 113 to 162 is SAHS-c3; that stretch reads KYFEDGNKLVADVSIPAKGKSIHDVYDVQGDQLIKSYKVGDVVAKKWFKK.

The protein belongs to the Secretory-abundant heat soluble protein (SAHS) family.

It localises to the secreted. Functionally, secreted heat soluble protein acting as a molecular shield in water-deficient condition. Tardigrade-specific intrinsically disordered proteins (TDPs) are essential for desiccation tolerance by forming non-crystalline amorphous solids upon desiccation, and this vitrified state mirrors their protective capabilities. The chain is Secretory-abundant heat soluble protein 33020 from Hypsibius exemplaris (Freshwater tardigrade).